We begin with the raw amino-acid sequence, 124 residues long: V-type proton ATPase subunit F (124 aa).

Belongs to the V-ATPase F subunit family. In terms of assembly, V-ATPase is a heteromultimeric enzyme composed of a peripheral catalytic V1 complex (components A to H) attached to an integral membrane V0 proton pore complex (components: a, c, c', c'', d, e, f and VOA1).

The protein resides in the vacuole membrane. Subunit of the V1 complex of vacuolar(H+)-ATPase (V-ATPase), a multisubunit enzyme composed of a peripheral complex (V1) that hydrolyzes ATP and a membrane integral complex (V0) that translocates protons. V-ATPase is responsible for acidifying and maintaining the pH of intracellular compartments. The chain is V-type proton ATPase subunit F (vma7) from Neosartorya fischeri (strain ATCC 1020 / DSM 3700 / CBS 544.65 / FGSC A1164 / JCM 1740 / NRRL 181 / WB 181) (Aspergillus fischerianus).